The primary structure comprises 529 residues: GMP synthase [glutamine-hydrolyzing] (529 aa).

One can recognise a Glutamine amidotransferase type-1 domain in the interval 17-206; the sequence is TILVLDFGSQ…AIDICQASNN (190 aa). Residue C93 is the Nucleophile of the active site. Residues H180 and E182 contribute to the active site. The GMPS ATP-PPase domain maps to 207-404; it reads WTMENFIDTE…MGVPHDLVWR (198 aa). 235–241 contacts ATP; sequence SGGVDST. Positions 308, 466, 521, and 527 each coordinate XMP.

In terms of assembly, homodimer. Mg(2+) is required as a cofactor.

It localises to the cytoplasm. Its subcellular location is the cytosol. It carries out the reaction XMP + L-glutamine + ATP + H2O = GMP + L-glutamate + AMP + diphosphate + 2 H(+). Its pathway is purine metabolism; GMP biosynthesis; GMP from XMP (L-Gln route): step 1/1. Its function is as follows. Catalyzes the conversion of xanthine monophosphate (XMP) to GMP in the presence of glutamine and ATP through an adenyl-XMP intermediate. In Debaryomyces hansenii (strain ATCC 36239 / CBS 767 / BCRC 21394 / JCM 1990 / NBRC 0083 / IGC 2968) (Yeast), this protein is GMP synthase [glutamine-hydrolyzing] (GUA1).